The primary structure comprises 47 residues: Fasciclin-like arabinogalactan protein (47 aa).

Residues 1 to 47 enclose the FAS1 domain; it reads APTPATLNGLTIFAPNDEAFKATGVPDLSKLSNAPMVSLLQYHAAAR.

Belongs to the fasciclin-like AGP family.

Functionally, may be a cell surface adhesion protein. The polypeptide is Fasciclin-like arabinogalactan protein (Jatropha curcas (Barbados nut)).